Reading from the N-terminus, the 229-residue chain is Lactate utilization protein C (229 aa).

This sequence belongs to the LutC/YkgG family.

In terms of biological role, is involved in L-lactate degradation and allows cells to grow with lactate as the sole carbon source. The protein is Lactate utilization protein C of Shouchella clausii (strain KSM-K16) (Alkalihalobacillus clausii).